Reading from the N-terminus, the 190-residue chain is UPF0301 protein Rpic_0619 (190 aa).

This sequence belongs to the UPF0301 (AlgH) family.

This is UPF0301 protein Rpic_0619 from Ralstonia pickettii (strain 12J).